Here is a 259-residue protein sequence, read N- to C-terminus: 4-hydroxy-tetrahydrodipicolinate reductase (259 aa).

NAD(+)-binding positions include 9–14 (GAGGRM) and Glu-35. Arg-36 serves as a coordination point for NADP(+). NAD(+) contacts are provided by residues 92–94 (GTT) and 116–119 (APNM). His-149 serves as the catalytic Proton donor/acceptor. Position 150 (His-150) interacts with (S)-2,3,4,5-tetrahydrodipicolinate. Lys-153 functions as the Proton donor in the catalytic mechanism. 159–160 (GT) provides a ligand contact to (S)-2,3,4,5-tetrahydrodipicolinate.

Belongs to the DapB family.

It localises to the cytoplasm. It carries out the reaction (S)-2,3,4,5-tetrahydrodipicolinate + NAD(+) + H2O = (2S,4S)-4-hydroxy-2,3,4,5-tetrahydrodipicolinate + NADH + H(+). The catalysed reaction is (S)-2,3,4,5-tetrahydrodipicolinate + NADP(+) + H2O = (2S,4S)-4-hydroxy-2,3,4,5-tetrahydrodipicolinate + NADPH + H(+). It functions in the pathway amino-acid biosynthesis; L-lysine biosynthesis via DAP pathway; (S)-tetrahydrodipicolinate from L-aspartate: step 4/4. In terms of biological role, catalyzes the conversion of 4-hydroxy-tetrahydrodipicolinate (HTPA) to tetrahydrodipicolinate. The polypeptide is 4-hydroxy-tetrahydrodipicolinate reductase (Oleidesulfovibrio alaskensis (strain ATCC BAA-1058 / DSM 17464 / G20) (Desulfovibrio alaskensis)).